A 422-amino-acid polypeptide reads, in one-letter code: Serine/threonine-protein kinase H1 homolog (422 aa).

Residues 35-80 are disordered; it reads FIKYDGGGEKTGSPSPQGQSQAVAKVSQSPPPANDQPEPADSHRKK. Residues 46 to 62 are compositionally biased toward polar residues; that stretch reads GSPSPQGQSQAVAKVSQ. The region spanning 96–353 is the Protein kinase domain; that stretch reads YDIKALIGRG…AGQALKHPWI (258 aa). ATP-binding positions include 102-110 and Lys-125; that span reads IGRGSFSRV. The active-site Proton acceptor is the Asp-216. The disordered stretch occupies residues 376 to 422; sequence RASSRCHSTKSSQSTRSSRSTKSSKARRLREKELRELNRRYQQQCNG. A compositionally biased stretch (low complexity) spans 384 to 396; it reads TKSSQSTRSSRST. Positions 405 to 414 are enriched in basic and acidic residues; the sequence is REKELRELNR.

Belongs to the protein kinase superfamily. CAMK Ser/Thr protein kinase family.

It carries out the reaction L-seryl-[protein] + ATP = O-phospho-L-seryl-[protein] + ADP + H(+). It catalyses the reaction L-threonyl-[protein] + ATP = O-phospho-L-threonyl-[protein] + ADP + H(+). This Danio rerio (Zebrafish) protein is Serine/threonine-protein kinase H1 homolog (pskh1).